A 201-amino-acid polypeptide reads, in one-letter code: FMN-dependent NADH:quinone oxidoreductase (201 aa).

Residues serine 10, 16–18 (SQS), 96–99 (MYNF), and 140–143 (SRGG) each bind FMN.

Belongs to the azoreductase type 1 family. As to quaternary structure, homodimer. FMN is required as a cofactor.

It carries out the reaction 2 a quinone + NADH + H(+) = 2 a 1,4-benzosemiquinone + NAD(+). The enzyme catalyses N,N-dimethyl-1,4-phenylenediamine + anthranilate + 2 NAD(+) = 2-(4-dimethylaminophenyl)diazenylbenzoate + 2 NADH + 2 H(+). Its function is as follows. Quinone reductase that provides resistance to thiol-specific stress caused by electrophilic quinones. Also exhibits azoreductase activity. Catalyzes the reductive cleavage of the azo bond in aromatic azo compounds to the corresponding amines. This is FMN-dependent NADH:quinone oxidoreductase from Shigella boydii serotype 4 (strain Sb227).